A 475-amino-acid polypeptide reads, in one-letter code: Bystin (475 aa).

Basic residues-rich tracts occupy residues 1–12 (MGKDVKKVHKLR) and 29–41 (KPHK…RKKK). Disordered regions lie at residues 1–57 (MGKD…ESVI) and 106–149 (DFID…QFGV). 2 stretches are compositionally biased toward acidic residues: residues 45–54 (ENDTGIDETE) and 107–119 (FIDD…DADQ).

It belongs to the bystin family.

Its subcellular location is the nucleus. It localises to the nucleolus. Functionally, required for processing of 20S pre-rRNA precursor and biogenesis of 40S ribosomal subunits. The protein is Bystin (bysl) of Dictyostelium discoideum (Social amoeba).